Reading from the N-terminus, the 535-residue chain is Doublesex- and mab-3-related transcription factor A2 (535 aa).

Positions 69–116 (CARCRNHGVVSALKGHKRYCRWKDCLCAKCTLIAERQRVMAAQVALRR) form a DNA-binding region, DM. Positions 200–315 (LQAGRPGSPQ…GGPGPRQRTP (116 aa)) are disordered. The DMA domain occupies 313-348 (RTPLDILTRVFPGHRRGVLELVLQGCGGDVVQAIEQ).

The protein belongs to the DMRT family.

The protein resides in the nucleus. May be involved in sexual development. The protein is Doublesex- and mab-3-related transcription factor A2 (DMRTA2) of Bos taurus (Bovine).